Consider the following 629-residue polypeptide: Forkhead box protein O (629 aa).

Phosphothreonine; by PKB/AKT1 is present on threonine 49. Phosphoserine is present on serine 78. The fork-head DNA-binding region spans 98–204; sequence WGNLSYADLI…ETSRYEKRRG (107 aa). Disordered stretches follow at residues 185–208, 220–274, 321–368, 394–417, and 563–597; these read KSVR…RAKK, GLND…SPIR, QQQF…QTLQ, SPNS…DSLN, and QHLQ…NSSL. Residue serine 193 is modified to Phosphoserine; by PKB/AKT1. Composition is skewed to polar residues over residues 224 to 233 and 259 to 268; these read ATPSPSSSVS and RASSNASSCG. Position 262 is a phosphoserine; by PKB/AKT1 (serine 262). A phosphoserine mark is found at serine 265, serine 266, and serine 271. The span at 332–341 shows a compositional bias: pro residues; the sequence is SQPPPPPYQP. Over residues 342-356 the composition is skewed to low complexity; the sequence is PQLQQQQQQQPSYSL. Residues 394-403 are compositionally biased toward polar residues; sequence SPNSVTTTMS.

Interacts with melt.

Its subcellular location is the cytoplasm. The protein resides in the nucleus. Its function is as follows. Transcription factor involved in the regulation of the insulin signaling pathway. Consistently activates both the downstream target Thor\d4EBP and the feedback control target InR. Involved in negative regulation of the cell cycle, modulating cell growth and proliferation. In response to cellular stresses, such as nutrient deprivation or increased levels of reactive oxygen species, foxo is activated and inhibits growth through the action of target genes such as Thor. Foxo activated in the adult fat body can regulate lifespan in adults; an insulin peptide itself may function as one secondary messenger of insulin-regulated aging. Also regulates Lip4, homolog of human acid lipases, thereby acting as a key modulator of lipid metabolism by insulin signaling and integrates insulin responses to glucose and lipid homeostasis. In Drosophila persimilis (Fruit fly), this protein is Forkhead box protein O.